The primary structure comprises 202 residues: Riboflavin synthase (202 aa).

Lumazine-binding repeat units lie at residues 1–101 (MFTG…MGGH) and 102–198 (LVFG…ARLA). Residues 4-6 (GII), 47-49 (CLT), 66-68 (EAW), 105-107 (GHV), Lys-140, 149-151 (SLT), and 163-168 (LLIRHS) contribute to the 2,4-dihydroxypteridine site.

In terms of assembly, homotrimer.

It catalyses the reaction 2 6,7-dimethyl-8-(1-D-ribityl)lumazine + H(+) = 5-amino-6-(D-ribitylamino)uracil + riboflavin. It participates in cofactor biosynthesis; riboflavin biosynthesis; riboflavin from 2-hydroxy-3-oxobutyl phosphate and 5-amino-6-(D-ribitylamino)uracil: step 2/2. Its activity is regulated as follows. Is inhibited by riboflavin. Product inhibition may be the major mechanism by which RS regulates its enzymatic activity in vivo. Functionally, catalyzes the dismutation of two molecules of 6,7-dimethyl-8-ribityllumazine, resulting in the formation of riboflavin and 5-amino-6-(D-ribitylamino)uracil. The protein is Riboflavin synthase of Brucella abortus (strain 2308).